The following is a 56-amino-acid chain: Large ribosomal subunit protein bL32 (56 aa).

The tract at residues 1–39 is disordered; it reads MAVQQNKKSRSKRGMRRSHDSLSTAQLSVDATSGELHRR. Over residues 7–16 the composition is skewed to basic residues; sequence KKSRSKRGMR. A compositionally biased stretch (polar residues) spans 21–31; it reads SLSTAQLSVDA.

Belongs to the bacterial ribosomal protein bL32 family.

This chain is Large ribosomal subunit protein bL32, found in Shewanella piezotolerans (strain WP3 / JCM 13877).